Consider the following 360-residue polypeptide: Photosystem II protein D1 (360 aa).

A run of 3 helical transmembrane segments spans residues 30-47 (YVGWFGVLMIPCLLAAAI), 119-134 (HFLIGICGWMGRQWEL), and 143-157 (WICVAYSAPVSAAFA). H119 lines the chlorophyll a pocket. Pheophytin a is bound at residue W127. [CaMn4O5] cluster contacts are provided by D171 and E190. A helical membrane pass occupies residues 198–219 (FHMAGVAGMFGGSLFSAMHGSL). H199 lines the chlorophyll a pocket. A quinone contacts are provided by residues H216 and 265–266 (SF). Residue H216 participates in Fe cation binding. Residue H273 participates in Fe cation binding. A helical transmembrane segment spans residues 275 to 289 (FLAIFPVVCVWLTSM). 4 residues coordinate [CaMn4O5] cluster: H333, E334, D343, and A345. A propeptide spanning residues 346–360 (AAESTSVALVAPSIG) is cleaved from the precursor.

This sequence belongs to the reaction center PufL/M/PsbA/D family. As to quaternary structure, PSII is composed of 1 copy each of membrane proteins PsbA, PsbB, PsbC, PsbD, PsbE, PsbF, PsbH, PsbI, PsbJ, PsbK, PsbL, PsbM, PsbT, PsbX, PsbY, Psb30/Ycf12, peripheral proteins PsbO, CyanoQ (PsbQ), PsbU, PsbV and a large number of cofactors. It forms dimeric complexes. The D1/D2 heterodimer binds P680, chlorophylls that are the primary electron donor of PSII, and subsequent electron acceptors. It shares a non-heme iron and each subunit binds pheophytin, quinone, additional chlorophylls, carotenoids and lipids. D1 provides most of the ligands for the Mn4-Ca-O5 cluster of the oxygen-evolving complex (OEC). There is also a Cl(-1) ion associated with D1 and D2, which is required for oxygen evolution. The PSII complex binds additional chlorophylls, carotenoids and specific lipids. is required as a cofactor. Post-translationally, tyr-162 forms a radical intermediate that is referred to as redox-active TyrZ, YZ or Y-Z. In terms of processing, C-terminally processed by CtpA; processing is essential to allow assembly of the oxygen-evolving complex and thus photosynthetic growth.

The protein resides in the cellular thylakoid membrane. The catalysed reaction is 2 a plastoquinone + 4 hnu + 2 H2O = 2 a plastoquinol + O2. In terms of biological role, photosystem II (PSII) is a light-driven water:plastoquinone oxidoreductase that uses light energy to abstract electrons from H(2)O, generating O(2) and a proton gradient subsequently used for ATP formation. It consists of a core antenna complex that captures photons, and an electron transfer chain that converts photonic excitation into a charge separation. The D1/D2 (PsbA/PsbD) reaction center heterodimer binds P680, the primary electron donor of PSII as well as several subsequent electron acceptors. This chain is Photosystem II protein D1, found in Prochlorococcus marinus (strain SARG / CCMP1375 / SS120).